The following is a 251-amino-acid chain: Triosephosphate isomerase (251 aa).

12-14 is a substrate binding site; that stretch reads NWK. His-98 serves as the catalytic Electrophile. Glu-168 serves as the catalytic Proton acceptor. Substrate contacts are provided by residues Gly-174, Ser-213, and 234–235; that span reads GG.

This sequence belongs to the triosephosphate isomerase family. In terms of assembly, homodimer.

Its subcellular location is the cytoplasm. The catalysed reaction is D-glyceraldehyde 3-phosphate = dihydroxyacetone phosphate. The protein operates within carbohydrate biosynthesis; gluconeogenesis. Its pathway is carbohydrate degradation; glycolysis; D-glyceraldehyde 3-phosphate from glycerone phosphate: step 1/1. Involved in the gluconeogenesis. Catalyzes stereospecifically the conversion of dihydroxyacetone phosphate (DHAP) to D-glyceraldehyde-3-phosphate (G3P). The chain is Triosephosphate isomerase from Bradyrhizobium diazoefficiens (strain JCM 10833 / BCRC 13528 / IAM 13628 / NBRC 14792 / USDA 110).